Here is a 26-residue protein sequence, read N- to C-terminus: Thioredoxin H-type (26 aa).

It belongs to the thioredoxin family. Plant H-type subfamily.

The protein localises to the cytoplasm. In terms of biological role, participates in various redox reactions through the reversible oxidation of the active center dithiol to a disulfide. The H form is known to activate a number of cytosolic enzymes. The polypeptide is Thioredoxin H-type (Populus euphratica (Euphrates poplar)).